The chain runs to 209 residues: Uracil phosphoribosyltransferase (209 aa).

5-phospho-alpha-D-ribose 1-diphosphate contacts are provided by residues arginine 79, arginine 104, and 131-139; that span reads DPMLATGGS. Uracil contacts are provided by residues isoleucine 194 and 199–201; that span reads GDA. A 5-phospho-alpha-D-ribose 1-diphosphate-binding site is contributed by aspartate 200.

It belongs to the UPRTase family. Requires Mg(2+) as cofactor.

The catalysed reaction is UMP + diphosphate = 5-phospho-alpha-D-ribose 1-diphosphate + uracil. It functions in the pathway pyrimidine metabolism; UMP biosynthesis via salvage pathway; UMP from uracil: step 1/1. Allosterically activated by GTP. Catalyzes the conversion of uracil and 5-phospho-alpha-D-ribose 1-diphosphate (PRPP) to UMP and diphosphate. This is Uracil phosphoribosyltransferase from Streptococcus pneumoniae (strain ATCC BAA-255 / R6).